The primary structure comprises 177 residues: Adenylyl-sulfate kinase (177 aa).

12 to 19 (GLSGAGKT) contacts ATP. Residue Ser86 is the Phosphoserine intermediate of the active site.

Belongs to the APS kinase family.

It carries out the reaction adenosine 5'-phosphosulfate + ATP = 3'-phosphoadenylyl sulfate + ADP + H(+). Its pathway is sulfur metabolism; hydrogen sulfide biosynthesis; sulfite from sulfate: step 2/3. Functionally, catalyzes the synthesis of activated sulfate. The sequence is that of Adenylyl-sulfate kinase from Picosynechococcus sp. (strain ATCC 27264 / PCC 7002 / PR-6) (Agmenellum quadruplicatum).